The sequence spans 538 residues: Frizzled-4 (538 aa).

Positions 1–37 (MAWQGTGPSVRGMPGGVRLRLGLLLLQLLLLQRPALG) are cleaved as a signal peptide. At 38-213 (FGDEEERRCD…KCGYDAGLYS (176 aa)) the chain is on the extracellular side. The FZ domain maps to 41–162 (EEERRCDPIR…NDHNHMCMEG (122 aa)). 8 disulfide bridges follow: Cys46/Cys107, Cys54/Cys100, Cys91/Cys129, Cys118/Cys159, Cys122/Cys146, Cys182/Cys201, Cys205/Cys283, and Cys303/Cys378. N-linked (GlcNAc...) asparagine glycosylation is present at Asn60. The N-linked (GlcNAc...) asparagine glycan is linked to Asn145. The chain crosses the membrane as a helical span at residues 214 to 244 (RSAKEFTDIWMAVWASLCFISTTFTVLTFLI). Over 245 to 250 (DSSRFS) the chain is Cytoplasmic. Residues 251-276 (YPERPIIFLSMCYNIYSIAYIVRLTV) traverse the membrane as a helical segment. The Extracellular segment spans residues 277-300 (GRERISCDFEEAAEPVLIQEGLKN). Residues 301–334 (TGCAIIFLLMYFFGMASSIWWVILTLTWFLAAGL) form a helical membrane-spanning segment. Over 335–337 (KWG) the chain is Cytoplasmic. A helical membrane pass occupies residues 338–366 (HEAIEMHSSYFHIAAWAIPAVKTIVILIM). Residues 367-384 (RLVDADELTGLCYVGNQS) lie on the Extracellular side of the membrane. Residue Asn382 is glycosylated (N-linked (GlcNAc...) asparagine). Residues 385-419 (LDALTGFVVAPLFTYLVIGTLFIAAGLVALFKIRS) traverse the membrane as a helical segment. The Cytoplasmic portion of the chain corresponds to 420–432 (NLQKDGTKTDKLE). A helical transmembrane segment spans residues 433–461 (RLMVKIGVFSVLYTVPATCVIACYFYEIS). Residues 462-474 (NWALFRYSADDSN) are Extracellular-facing. Residues 475–496 (MAVEMLKIFMSLLVGITSGMWI) traverse the membrane as a helical segment. Topologically, residues 497 to 538 (WSAKTLHTWQKCSNRLVNSGKVKREKRGNGWVKPGKGNETVV) are cytoplasmic. Positions 500–505 (KTLHTW) match the Lys-Thr-X-X-X-Trp motif, mediates interaction with the PDZ domain of Dvl family members motif. The PDZ-binding motif lies at 536 to 538 (TVV).

Belongs to the G-protein coupled receptor Fz/Smo family. As to quaternary structure, interacts with MAGI3 and NDP. Component of a complex, at least composed of TSPAN12, FZD4 and norrin (NDP). Interacts (via FZ domain) with TSKU; TSKU competes with WNT2B for binding to FZD4, inhibiting Wnt signaling and repressing peripheral eye development. Interacts with glypican GPC3. Post-translationally, ubiquitinated by ZNRF3, leading to its degradation by the proteasome.

It localises to the cell membrane. In terms of biological role, receptor for Wnt proteins. Most of frizzled receptors are coupled to the beta-catenin (CTNNB1) canonical signaling pathway, which leads to the activation of disheveled proteins, inhibition of GSK-3 kinase, nuclear accumulation of beta-catenin (CTNNB1) and activation of Wnt target genes. Plays a critical role in retinal vascularization by acting as a receptor for Wnt proteins and norrin (NDP). In retina, it can be both activated by Wnt protein-binding, but also by a Wnt-independent signaling via binding of norrin (NDP), promoting in both cases beta-catenin (CTNNB1) accumulation and stimulation of LEF/TCF-mediated transcriptional programs. A second signaling pathway involving PKC and calcium fluxes has been seen for some family members, but it is not yet clear if it represents a distinct pathway or if it can be integrated in the canonical pathway, as PKC seems to be required for Wnt-mediated inactivation of GSK-3 kinase. Both pathways seem to involve interactions with G-proteins. May be involved in transduction and intercellular transmission of polarity information during tissue morphogenesis and/or in differentiated tissues. The polypeptide is Frizzled-4 (Fzd4) (Rattus norvegicus (Rat)).